We begin with the raw amino-acid sequence, 270 residues long: 3-methyl-2-oxobutanoate hydroxymethyltransferase (270 aa).

Residues D50 and D89 each coordinate Mg(2+). Residues 50 to 51 (DS), D89, and K118 contribute to the 3-methyl-2-oxobutanoate site. Residue E120 participates in Mg(2+) binding. E187 serves as the catalytic Proton acceptor.

Belongs to the PanB family. In terms of assembly, homodecamer; pentamer of dimers. It depends on Mg(2+) as a cofactor.

It localises to the cytoplasm. The enzyme catalyses 3-methyl-2-oxobutanoate + (6R)-5,10-methylene-5,6,7,8-tetrahydrofolate + H2O = 2-dehydropantoate + (6S)-5,6,7,8-tetrahydrofolate. It functions in the pathway cofactor biosynthesis; (R)-pantothenate biosynthesis; (R)-pantoate from 3-methyl-2-oxobutanoate: step 1/2. Catalyzes the reversible reaction in which hydroxymethyl group from 5,10-methylenetetrahydrofolate is transferred onto alpha-ketoisovalerate to form ketopantoate. In Helicobacter pylori (strain Shi470), this protein is 3-methyl-2-oxobutanoate hydroxymethyltransferase.